The primary structure comprises 145 residues: Putative pre-16S rRNA nuclease (145 aa).

This sequence belongs to the YqgF nuclease family.

It localises to the cytoplasm. Its function is as follows. Could be a nuclease involved in processing of the 5'-end of pre-16S rRNA. The chain is Putative pre-16S rRNA nuclease from Sulfurihydrogenibium sp. (strain YO3AOP1).